We begin with the raw amino-acid sequence, 633 residues long: Phosphomethylpyrimidine synthase (633 aa).

Positions methionine 1–alanine 13 are enriched in polar residues. The tract at residues methionine 1 to serine 22 is disordered. Substrate is bound by residues asparagine 221, methionine 250, tyrosine 279, histidine 315, serine 335–glycine 337, aspartate 376–arginine 379, and glutamate 415. Histidine 419 contacts Zn(2+). Tyrosine 442 lines the substrate pocket. Histidine 483 is a Zn(2+) binding site. Positions 563, 566, and 571 each coordinate [4Fe-4S] cluster.

This sequence belongs to the ThiC family. In terms of assembly, homodimer. The cofactor is [4Fe-4S] cluster.

It catalyses the reaction 5-amino-1-(5-phospho-beta-D-ribosyl)imidazole + S-adenosyl-L-methionine = 4-amino-2-methyl-5-(phosphooxymethyl)pyrimidine + CO + 5'-deoxyadenosine + formate + L-methionine + 3 H(+). It participates in cofactor biosynthesis; thiamine diphosphate biosynthesis. Functionally, catalyzes the synthesis of the hydroxymethylpyrimidine phosphate (HMP-P) moiety of thiamine from aminoimidazole ribotide (AIR) in a radical S-adenosyl-L-methionine (SAM)-dependent reaction. The protein is Phosphomethylpyrimidine synthase of Bradyrhizobium sp. (strain BTAi1 / ATCC BAA-1182).